Reading from the N-terminus, the 803-residue chain is MGVGLCGRGIVAKPRLYEVASDLGTDSKTLMGILREMGEFVKSPSSALEPPVVRKLAKAFAEKYPDKVEEKKEHTPPAPVVETPKAPPPLPRPIIRHAVRGVPSGAPRPGNNPYAPRQGMGQLATPGPATKRPVKFKAEGDKKPASTHRRVPAPLPQKRTPLRGRGAPGAFGRGNKPKSRKSKTLKRQEFEMRDAPVIGGVTIPRGDGRVIRLMQGASVTDFAEKIDVLPANLLSVLFHLGEMATATESLDEATFEILAEEIGYKVQIVSPDDEDRALLESFSVNLAAEHAEDSELDLAIRPPVVTIMGHVDHGKTLLLDTIRNTNTLAEESGGITQHIGAYQVSVGDRFVTFIDTPGHEAFTAMRARGAKVTDIAVLVVAADDGIMPQTIEALDHARSADVPIVVAVNKIDKEGANPAKIRQQMTEFDVIPEEYGGDVMFIDISAKTGQGVDALLEAILLTADAALELRANPDRTARGVTIEAKLDAGRGAVATVLVQSGTLRVGDRVVTGCAYGRVRAMVDENGLPVESAPPSRPVRVQGLSSVPKAGDSFIVVAEDRQARQIAEKREANERNAQLAKSRKRVSLEDFTRAIQEGRVQSLNMIIKGDVSGAVEALEESLSKLDVGEEVSLRIIHRGVGAITESDVNLATVDNAVVIGFNVRPDRKARDRAAREGVDVRFYSVIYDAIEDIEKSLKGLLKPELEERKLGLAIVKEVFHSSRVGTIAGCSVESGSITRNAKARLIRDGVVVVNDLTVTSLRRFKDDVTEVKSGFECGVGLGSCDDIRIGDEIETIQIVEKPRA.

Basic and acidic residues predominate over residues 65–75; that stretch reads PDKVEEKKEHT. The interval 65–186 is disordered; that stretch reads PDKVEEKKEH…PKSRKSKTLK (122 aa). The segment covering 175–185 has biased composition (basic residues); that stretch reads NKPKSRKSKTL. In terms of domain architecture, tr-type G spans 300–468; that stretch reads IRPPVVTIMG…ILLTADAALE (169 aa). A G1 region spans residues 309 to 316; that stretch reads GHVDHGKT. 309–316 contacts GTP; it reads GHVDHGKT. The tract at residues 334–338 is G2; sequence GITQH. The G3 stretch occupies residues 355 to 358; it reads DTPG. Residues 355–359 and 409–412 each bind GTP; these read DTPGH and NKID. Residues 409–412 are G4; the sequence is NKID. Positions 445-447 are G5; it reads SAK.

The protein belongs to the TRAFAC class translation factor GTPase superfamily. Classic translation factor GTPase family. IF-2 subfamily.

The protein localises to the cytoplasm. In terms of biological role, one of the essential components for the initiation of protein synthesis. Protects formylmethionyl-tRNA from spontaneous hydrolysis and promotes its binding to the 30S ribosomal subunits. Also involved in the hydrolysis of GTP during the formation of the 70S ribosomal complex. This Tropheryma whipplei (strain Twist) (Whipple's bacillus) protein is Translation initiation factor IF-2.